Reading from the N-terminus, the 855-residue chain is Protein KRI1 homolog (855 aa).

Disordered regions lie at residues 47–67, 82–117, 130–196, 312–342, 424–453, and 589–855; these read VSES…VDPK, KDPC…KAKP, EHNG…KTKE, SLRR…MKEL, YDPR…CDYD, and KSLY…KKDN. The segment covering 48 to 64 has biased composition (acidic residues); the sequence is SESEFDSDSSSSEEDEV. The segment covering 82–91 has biased composition (basic and acidic residues); sequence KDPCIYDKGT. 5 positions are modified to phosphoserine: serine 95, serine 97, serine 98, serine 137, and serine 138. Positions 160–176 are enriched in basic and acidic residues; sequence EEERRLKAEFRKVMNKE. Serine 179 bears the Phosphoserine mark. A coiled-coil region spans residues 307-362; that stretch reads RTIEQSLRRTDDKRKEKRKELKERKDQEKQQKMKELELVKEMKRKEIDEKIRKLKA. The segment covering 441–452 has biased composition (acidic residues); that stretch reads CEDDDFNMDCDY. A compositionally biased stretch (low complexity) spans 609–619; it reads VTPAEATAPAE. A compositionally biased stretch (basic residues) spans 630 to 640; that stretch reads KSKRKRLKRKA. Basic and acidic residues-rich tracts occupy residues 650-664 and 674-692; these read VLKE…KEAD and SSKK…DANQ. Polar residues-rich tracts occupy residues 720 to 748, 756 to 773, and 792 to 805; these read VQNG…TTES, SNGN…QQRQ, and ANGT…NQKP. Low complexity predominate over residues 812-826; the sequence is KKTNNFKAKNKQNNN. Residues 842-855 show a composition bias toward basic residues; that stretch reads RKFHKREKYGKKDN.

This sequence belongs to the KRI1 family.

In Drosophila melanogaster (Fruit fly), this protein is Protein KRI1 homolog.